The following is a 483-amino-acid chain: Cobyric acid synthase (483 aa).

The GATase cobBQ-type domain occupies 252–439 (KLKVVVPVLT…LHGFLDSEAV (188 aa)). The active-site Nucleophile is Cys333. His431 is an active-site residue.

The protein belongs to the CobB/CobQ family. CobQ subfamily.

It functions in the pathway cofactor biosynthesis; adenosylcobalamin biosynthesis. Catalyzes amidations at positions B, D, E, and G on adenosylcobyrinic A,C-diamide. NH(2) groups are provided by glutamine, and one molecule of ATP is hydrogenolyzed for each amidation. The protein is Cobyric acid synthase of Vibrio vulnificus (strain CMCP6).